We begin with the raw amino-acid sequence, 347 residues long: Succinylglutamate desuccinylase (347 aa).

3 residues coordinate Zn(2+): His64, Glu67, and His159. Glu222 is a catalytic residue.

The protein belongs to the AspA/AstE family. Succinylglutamate desuccinylase subfamily. The cofactor is Zn(2+).

The enzyme catalyses N-succinyl-L-glutamate + H2O = L-glutamate + succinate. It participates in amino-acid degradation; L-arginine degradation via AST pathway; L-glutamate and succinate from L-arginine: step 5/5. In terms of biological role, transforms N(2)-succinylglutamate into succinate and glutamate. In Burkholderia cenocepacia (strain ATCC BAA-245 / DSM 16553 / LMG 16656 / NCTC 13227 / J2315 / CF5610) (Burkholderia cepacia (strain J2315)), this protein is Succinylglutamate desuccinylase.